The sequence spans 182 residues: NADH-quinone oxidoreductase subunit B 2 (182 aa).

[4Fe-4S] cluster-binding residues include Cys-55, Cys-56, Cys-120, and Cys-150.

Belongs to the complex I 20 kDa subunit family. As to quaternary structure, NDH-1 is composed of 14 different subunits. Subunits NuoB, C, D, E, F, and G constitute the peripheral sector of the complex. The cofactor is [4Fe-4S] cluster.

The protein localises to the cell inner membrane. The enzyme catalyses a quinone + NADH + 5 H(+)(in) = a quinol + NAD(+) + 4 H(+)(out). NDH-1 shuttles electrons from NADH, via FMN and iron-sulfur (Fe-S) centers, to quinones in the respiratory chain. The immediate electron acceptor for the enzyme in this species is believed to be ubiquinone. Couples the redox reaction to proton translocation (for every two electrons transferred, four hydrogen ions are translocated across the cytoplasmic membrane), and thus conserves the redox energy in a proton gradient. The protein is NADH-quinone oxidoreductase subunit B 2 of Sorangium cellulosum (strain So ce56) (Polyangium cellulosum (strain So ce56)).